Here is a 714-residue protein sequence, read N- to C-terminus: Fatty acid oxidation complex subunit alpha (714 aa).

Residues 1-190 (MEMASAFTLN…KLGLVDDVVP (190 aa)) form an enoyl-CoA hydratase region. The tract at residues 306 to 714 (APLNSVGILG…FWKTTATDLQ (409 aa)) is 3-hydroxyacyl-CoA dehydrogenase.

The protein in the N-terminal section; belongs to the enoyl-CoA hydratase/isomerase family. This sequence in the central section; belongs to the 3-hydroxyacyl-CoA dehydrogenase family. As to quaternary structure, heterotetramer of two alpha chains (FadJ) and two beta chains (FadI).

It is found in the cytoplasm. It catalyses the reaction a (3S)-3-hydroxyacyl-CoA = a (2E)-enoyl-CoA + H2O. It carries out the reaction a 4-saturated-(3S)-3-hydroxyacyl-CoA = a (3E)-enoyl-CoA + H2O. The catalysed reaction is a (3S)-3-hydroxyacyl-CoA + NAD(+) = a 3-oxoacyl-CoA + NADH + H(+). The enzyme catalyses (3S)-3-hydroxybutanoyl-CoA = (3R)-3-hydroxybutanoyl-CoA. It participates in lipid metabolism; fatty acid beta-oxidation. Its function is as follows. Catalyzes the formation of a hydroxyacyl-CoA by addition of water on enoyl-CoA. Also exhibits 3-hydroxyacyl-CoA epimerase and 3-hydroxyacyl-CoA dehydrogenase activities. The sequence is that of Fatty acid oxidation complex subunit alpha from Shigella boydii serotype 4 (strain Sb227).